Reading from the N-terminus, the 195-residue chain is Cytochrome c oxidase assembly protein CtaG (195 aa).

Topologically, residues 1–7 are cytoplasmic; it reads MSGGKPR. A helical; Signal-anchor for type II membrane protein transmembrane segment spans residues 8 to 30; sequence SNTRTVAMLAGVVVLMGALSWAA. At 31 to 195 the chain is on the periplasmic side; it reads VPFYSWFCKV…LDAKTEPTVN (165 aa).

The protein belongs to the COX11/CtaG family.

The protein localises to the cell inner membrane. In terms of biological role, exerts its effect at some terminal stage of cytochrome c oxidase synthesis, probably by being involved in the insertion of the copper B into subunit I. The sequence is that of Cytochrome c oxidase assembly protein CtaG from Paracoccus denitrificans (strain Pd 1222).